The chain runs to 184 residues: GTP cyclohydrolase 1 (184 aa).

Zn(2+)-binding residues include Cys-75, His-78, and Cys-146.

This sequence belongs to the GTP cyclohydrolase I family. In terms of assembly, homomer.

The enzyme catalyses GTP + H2O = 7,8-dihydroneopterin 3'-triphosphate + formate + H(+). Its pathway is cofactor biosynthesis; 7,8-dihydroneopterin triphosphate biosynthesis; 7,8-dihydroneopterin triphosphate from GTP: step 1/1. The sequence is that of GTP cyclohydrolase 1 from Streptococcus pneumoniae (strain ATCC 700669 / Spain 23F-1).